A 186-amino-acid polypeptide reads, in one-letter code: Peptidyl-tRNA hydrolase (186 aa).

Y14 is a binding site for tRNA. The active-site Proton acceptor is H19. Y64, N66, and N112 together coordinate tRNA.

It belongs to the PTH family. In terms of assembly, monomer.

It is found in the cytoplasm. The catalysed reaction is an N-acyl-L-alpha-aminoacyl-tRNA + H2O = an N-acyl-L-amino acid + a tRNA + H(+). In terms of biological role, hydrolyzes ribosome-free peptidyl-tRNAs (with 1 or more amino acids incorporated), which drop off the ribosome during protein synthesis, or as a result of ribosome stalling. Its function is as follows. Catalyzes the release of premature peptidyl moieties from peptidyl-tRNA molecules trapped in stalled 50S ribosomal subunits, and thus maintains levels of free tRNAs and 50S ribosomes. The protein is Peptidyl-tRNA hydrolase of Bacillus cereus (strain Q1).